Consider the following 617-residue polypeptide: Vacuolar protein sorting-associated protein 33B (617 aa).

Belongs to the STXBP/unc-18/SEC1 family. Interacts with vipas39. As to expression, widely expressed from 4 hours post-fertilization (hpf) to 24 hpf. At 48 hpf, localized to brain, retina, ear, liver and proximal intestine. This expression pattern is more pronounced at 72 hpf and persists through 5 days post-fertilization (dpf). At 3 dpf and 4 dpf, expression in the liver is predominantly in developing biliary epithelial cells. No expression detected in kidney or spinal cord.

The protein resides in the late endosome membrane. It localises to the lysosome membrane. Functionally, may play a role in vesicle-mediated protein trafficking to lysosomal compartments and in membrane docking/fusion reactions of late endosomes/lysosomes. Required for proper trafficking and targeting of the collagen-modifying enzyme lysyl hydroxylase 3 (LH3) to intracellular collagen. Mediates phagolysosomal fusion in macrophages. Proposed to be involved in endosomal maturation implicating vipas39. In epithelial cells, the vps33b:vipas39 complex may play a role in the apical recycling pathway and in the maintenance of the apical-basolateral polarity. Plays a role in bile duct development. In Danio rerio (Zebrafish), this protein is Vacuolar protein sorting-associated protein 33B.